The primary structure comprises 300 residues: NAD kinase (300 aa).

Residue Asp-75 is the Proton acceptor of the active site. NAD(+) is bound by residues 75-76 (DG), 149-150 (ND), Arg-177, Asp-179, 190-195 (TAYALS), Ala-214, and Gln-248.

Belongs to the NAD kinase family. A divalent metal cation serves as cofactor.

It localises to the cytoplasm. The catalysed reaction is NAD(+) + ATP = ADP + NADP(+) + H(+). Involved in the regulation of the intracellular balance of NAD and NADP, and is a key enzyme in the biosynthesis of NADP. Catalyzes specifically the phosphorylation on 2'-hydroxyl of the adenosine moiety of NAD to yield NADP. The protein is NAD kinase of Burkholderia ambifaria (strain MC40-6).